We begin with the raw amino-acid sequence, 375 residues long: MPRRLQQRGAGVKGPPASTSRRSHPASASAPRSPPAATTKPLLRWDEVPDDFVECFILSGYRRLPCTAQECLASVLKPTNETLNFWTHFIPLLLFLSKFCRLFFLGGSDVPFHHPWLLPLWCYASGVLLTFAMSCTAHVFSCLSLRLRAAFFYLDYASISYYGFGSTVAYYYYLLPSLSLLDARVMTPYVQQRLGWHVDCTRLIAVYRALVLPVAFVLAVACTVACCKSRTDWCSYPFALRTFVFVMPLSMACPIMLESWLFDLRGENPTLFVHFYRRYFWLVVAAFFNVSKIPERIQPGLFDIIGHSHQLFHIFTFLSIYDQVYYVEEGLRQFLQAPPAAPTFSGTVGYMLLLVVCLGLVIRKFLNSTEFCSKK.

The disordered stretch occupies residues 1 to 39 (MPRRLQQRGAGVKGPPASTSRRSHPASASAPRSPPAATT). Topologically, residues 1–84 (MPRRLQQRGA…VLKPTNETLN (84 aa)) are cytoplasmic. Low complexity predominate over residues 15-39 (PPASTSRRSHPASASAPRSPPAATT). The chain crosses the membrane as a helical span at residues 85–105 (FWTHFIPLLLFLSKFCRLFFL). At 106–114 (GGSDVPFHH) the chain is on the extracellular side. The chain crosses the membrane as a helical span at residues 115 to 135 (PWLLPLWCYASGVLLTFAMSC). At 136-160 (TAHVFSCLSLRLRAAFFYLDYASIS) the chain is on the cytoplasmic side. Residues 161 to 181 (YYGFGSTVAYYYYLLPSLSLL) traverse the membrane as a helical segment. Residues 182-203 (DARVMTPYVQQRLGWHVDCTRL) lie on the Extracellular side of the membrane. Residues 204-224 (IAVYRALVLPVAFVLAVACTV) traverse the membrane as a helical segment. Over 225–241 (ACCKSRTDWCSYPFALR) the chain is Cytoplasmic. The chain crosses the membrane as a helical span at residues 242–262 (TFVFVMPLSMACPIMLESWLF). At 263-299 (DLRGENPTLFVHFYRRYFWLVVAAFFNVSKIPERIQP) the chain is on the extracellular side. Residues 300-320 (GLFDIIGHSHQLFHIFTFLSI) traverse the membrane as a helical segment. Residues 321–341 (YDQVYYVEEGLRQFLQAPPAA) are Cytoplasmic-facing. The helical transmembrane segment at 342-362 (PTFSGTVGYMLLLVVCLGLVI) threads the bilayer. At 363–375 (RKFLNSTEFCSKK) the chain is on the extracellular side.

This sequence belongs to the ADIPOR family. In terms of assembly, homodimer.

The protein resides in the cell membrane. Functionally, plasma membrane progesterone (P4) receptor coupled to G proteins. Seems to act through a G(s) mediated pathway. May be involved in regulating rapid P4 signaling in the nervous system. Also binds dehydroepiandrosterone (DHEA), pregnanolone, pregnenolone and allopregnanolone. The sequence is that of Membrane progesterone receptor epsilon from Mus musculus (Mouse).